The chain runs to 1157 residues: Endo-1,4-beta-xylanase A (1157 aa).

The N-terminal stretch at M1–A33 is a signal peptide. CBM-cenC domains lie at I38 to Q189 and G195 to E343. One can recognise a GH10 domain in the interval Q352–P675. The active-site Proton donor is E495. D537 is an active-site residue. E600 (nucleophile) is an active-site residue. SLH domains lie at K1051 to E1114 and F1115 to Q1157.

This sequence belongs to the glycosyl hydrolase 10 (cellulase F) family.

The enzyme catalyses Endohydrolysis of (1-&gt;4)-beta-D-xylosidic linkages in xylans.. The protein operates within glycan degradation; xylan degradation. Functionally, endo-acting enzyme that randomly cleaves the internal xylosidic linkages of the xylan backbone, yielding xylooligosaccharides of various lengths which are further hydrolyzed to xylose molecules by beta-xylosidase (EC 3.2.1.37). Requires at least three xylose residues for catalytic activity. Does not have activity against xylobiose. This Thermoanaerobacterium saccharolyticum protein is Endo-1,4-beta-xylanase A (xynA).